The sequence spans 159 residues: UPF0336 protein ML1910 (159 aa).

Belongs to the UPF0336 family.

This chain is UPF0336 protein ML1910, found in Mycobacterium leprae (strain TN).